The chain runs to 445 residues: UDP-N-acetylmuramoylalanine--D-glutamate ligase (445 aa).

Residue 111 to 117 (GTNGKST) participates in ATP binding.

Belongs to the MurCDEF family.

It is found in the cytoplasm. It catalyses the reaction UDP-N-acetyl-alpha-D-muramoyl-L-alanine + D-glutamate + ATP = UDP-N-acetyl-alpha-D-muramoyl-L-alanyl-D-glutamate + ADP + phosphate + H(+). The protein operates within cell wall biogenesis; peptidoglycan biosynthesis. Functionally, cell wall formation. Catalyzes the addition of glutamate to the nucleotide precursor UDP-N-acetylmuramoyl-L-alanine (UMA). The polypeptide is UDP-N-acetylmuramoylalanine--D-glutamate ligase (murD) (Rickettsia prowazekii (strain Madrid E)).